The sequence spans 288 residues: 4-diphosphocytidyl-2-C-methyl-D-erythritol kinase (288 aa).

Lysine 10 is a catalytic residue. 99 to 109 is an ATP binding site; sequence PMGGGLGGGSS. Residue aspartate 141 is part of the active site.

This sequence belongs to the GHMP kinase family. IspE subfamily. As to quaternary structure, homodimer.

It catalyses the reaction 4-CDP-2-C-methyl-D-erythritol + ATP = 4-CDP-2-C-methyl-D-erythritol 2-phosphate + ADP + H(+). It participates in isoprenoid biosynthesis; isopentenyl diphosphate biosynthesis via DXP pathway; isopentenyl diphosphate from 1-deoxy-D-xylulose 5-phosphate: step 3/6. In terms of biological role, catalyzes the phosphorylation of the position 2 hydroxy group of 4-diphosphocytidyl-2C-methyl-D-erythritol. The sequence is that of 4-diphosphocytidyl-2-C-methyl-D-erythritol kinase from Serratia proteamaculans (strain 568).